Here is a 274-residue protein sequence, read N- to C-terminus: Undecaprenyl-diphosphatase (274 aa).

Helical transmembrane passes span 4–24, 46–63, 82–102, 109–129, 184–204, 218–238, and 249–269; these read ILLLKALILGIVEGLTEFLPI, LFEIVIQSGAILAVVWEY, KFILNLFVAFLPLAILGLAFG, LFNPVTVASTFILGAFVILWA, ATEFSFFLAIPTLIVATFYQL, MWAVGFVAAFVSAFLCVRWLL, and FAWYRIAFGIVVLATWQFGWV.

It belongs to the UppP family.

Its subcellular location is the cell inner membrane. It catalyses the reaction di-trans,octa-cis-undecaprenyl diphosphate + H2O = di-trans,octa-cis-undecaprenyl phosphate + phosphate + H(+). Catalyzes the dephosphorylation of undecaprenyl diphosphate (UPP). Confers resistance to bacitracin. This Dechloromonas aromatica (strain RCB) protein is Undecaprenyl-diphosphatase.